The sequence spans 43 residues: Protein PsbN (43 aa).

The chain crosses the membrane as a helical span at residues 7–29 (VAIFLSGLLVSFTGYALYTAFGQ).

The protein belongs to the PsbN family.

The protein resides in the plastid. It localises to the chloroplast thylakoid membrane. May play a role in photosystem I and II biogenesis. The sequence is that of Protein PsbN from Draba nemorosa (Woodland whitlowgrass).